Here is a 351-residue protein sequence, read N- to C-terminus: Probable dual-specificity RNA methyltransferase RlmN (351 aa).

Glu102 serves as the catalytic Proton acceptor. A Radical SAM core domain is found at Asp110 to Asp339. Residues Cys117 and Cys344 are joined by a disulfide bond. Cys124, Cys128, and Cys131 together coordinate [4Fe-4S] cluster. S-adenosyl-L-methionine contacts are provided by residues Gly171–Glu172, Ser203, Ser226–Asn228, and Asn302. Cys344 functions as the S-methylcysteine intermediate in the catalytic mechanism.

This sequence belongs to the radical SAM superfamily. RlmN family. [4Fe-4S] cluster is required as a cofactor.

The protein resides in the cytoplasm. It carries out the reaction adenosine(2503) in 23S rRNA + 2 reduced [2Fe-2S]-[ferredoxin] + 2 S-adenosyl-L-methionine = 2-methyladenosine(2503) in 23S rRNA + 5'-deoxyadenosine + L-methionine + 2 oxidized [2Fe-2S]-[ferredoxin] + S-adenosyl-L-homocysteine. The enzyme catalyses adenosine(37) in tRNA + 2 reduced [2Fe-2S]-[ferredoxin] + 2 S-adenosyl-L-methionine = 2-methyladenosine(37) in tRNA + 5'-deoxyadenosine + L-methionine + 2 oxidized [2Fe-2S]-[ferredoxin] + S-adenosyl-L-homocysteine. Specifically methylates position 2 of adenine 2503 in 23S rRNA and position 2 of adenine 37 in tRNAs. The chain is Probable dual-specificity RNA methyltransferase RlmN from Leptospira borgpetersenii serovar Hardjo-bovis (strain JB197).